A 237-amino-acid chain; its full sequence is CD209 antigen-like protein D (237 aa).

Topologically, residues 1-54 are cytoplasmic; that stretch reads MSDSMESKTQQVVIPEDEECLMSGTRYSDISSRLQTKFGIKSLAEYTKQSRNPL. Residues 55–75 form a helical; Signal-anchor for type II membrane protein membrane-spanning segment; it reads VLQLLSFLFLAGLLLIILILV. At 76–237 the chain is on the extracellular side; the sequence is SKVPSSEVQN…KVSTSSCTTK (162 aa). An intrachain disulfide couples C106 to C117. Positions 112-227 constitute a C-type lectin domain; the sequence is FFNGSCYFFS…CDKLLFWICK (116 aa). N-linked (GlcNAc...) asparagine glycans are attached at residues N114 and N129. 2 disulfides stabilise this stretch: C134–C226 and C205–C218. 5 residues coordinate Ca(2+): E196, N198, E203, N214, and D215.

The protein localises to the membrane. Functionally, probable pathogen-recognition receptor. May mediate the endocytosis of pathogens which are subsequently degraded in lysosomal compartments. May recognize in a calcium-dependent manner high mannose N-linked oligosaccharides in a variety of pathogen antigens. The protein is CD209 antigen-like protein D (Cd209d) of Mus musculus (Mouse).